Here is a 318-residue protein sequence, read N- to C-terminus: Pantothenate kinase (318 aa).

96 to 103 (GSVAVGKS) is a binding site for ATP.

Belongs to the prokaryotic pantothenate kinase family.

Its subcellular location is the cytoplasm. The catalysed reaction is (R)-pantothenate + ATP = (R)-4'-phosphopantothenate + ADP + H(+). Its pathway is cofactor biosynthesis; coenzyme A biosynthesis; CoA from (R)-pantothenate: step 1/5. This Afipia carboxidovorans (strain ATCC 49405 / DSM 1227 / KCTC 32145 / OM5) (Oligotropha carboxidovorans) protein is Pantothenate kinase.